The following is a 287-amino-acid chain: MAGAKEIRNKIASVKNTQKITGAMEMVAASKMRKAQERMAYSRPYAVTMRKVIGHIALGNLEYKHSYLIEREVKRVGYIIVSTDRGLCGGLNINLFKSALVSMKEWKEQGVEVSTALIGSKAANFFERFGGKALAQVSGMGDAPSIGDLIGSVKVMLQAYDNGEIDRLYLVYNKFVNTMVQTPTVDQMLPLPKADDQALAKRHWDYLYEPDPKHLLNELLIRYVESQVYQGVVENLASEQAARMVAMKAATDNAGDLIGDLQLVYNKARQASITQELTEIVSGASAV.

The protein belongs to the ATPase gamma chain family. F-type ATPases have 2 components, CF(1) - the catalytic core - and CF(0) - the membrane proton channel. CF(1) has five subunits: alpha(3), beta(3), gamma(1), delta(1), epsilon(1). CF(0) has three main subunits: a, b and c.

It localises to the cell inner membrane. In terms of biological role, produces ATP from ADP in the presence of a proton gradient across the membrane. The gamma chain is believed to be important in regulating ATPase activity and the flow of protons through the CF(0) complex. This is ATP synthase gamma chain from Tolumonas auensis (strain DSM 9187 / NBRC 110442 / TA 4).